Consider the following 49-residue polypeptide: Large ribosomal subunit protein bL32 (49 aa).

Belongs to the bacterial ribosomal protein bL32 family.

The protein is Large ribosomal subunit protein bL32 of Helicobacter hepaticus (strain ATCC 51449 / 3B1).